Here is a 362-residue protein sequence, read N- to C-terminus: Diphosphomevalonate decarboxylase (362 aa).

(R)-5-diphosphomevalonate contacts are provided by residues 17 to 20, arginine 72, 150 to 155, and threonine 206; these read YWGK and SGSACR.

The protein belongs to the diphosphomevalonate decarboxylase family. Homodimer.

The catalysed reaction is (R)-5-diphosphomevalonate + ATP = isopentenyl diphosphate + ADP + phosphate + CO2. It functions in the pathway isoprenoid biosynthesis; isopentenyl diphosphate biosynthesis via mevalonate pathway; isopentenyl diphosphate from (R)-mevalonate: step 3/3. Diphosphomevalonate decarboxylase; part of the second module of ergosterol biosynthesis pathway that includes the middle steps of the pathway. MVD1 converts diphosphomevalonate into isopentenyl diphosphate. The second module is carried out in the vacuole and involves the formation of farnesyl diphosphate, which is also an important intermediate in the biosynthesis of ubiquinone, dolichol, heme and prenylated proteins. Activity by the mevalonate kinase ERG12 first converts mevalonate into 5-phosphomevalonate. 5-phosphomevalonate is then further converted to 5-diphosphomevalonate by the phosphomevalonate kinase ERG8. The diphosphomevalonate decarboxylase MVD then produces isopentenyl diphosphate. The isopentenyl-diphosphate delta-isomerase IDI1 then catalyzes the 1,3-allylic rearrangement of the homoallylic substrate isopentenyl (IPP) to its highly electrophilic allylic isomer, dimethylallyl diphosphate (DMAPP). Finally the farnesyl diphosphate synthase ERG20 catalyzes the sequential condensation of isopentenyl pyrophosphate with dimethylallyl pyrophosphate, and then with the resultant geranylpyrophosphate to the ultimate product farnesyl pyrophosphate. The polypeptide is Diphosphomevalonate decarboxylase (Candida albicans (strain SC5314 / ATCC MYA-2876) (Yeast)).